The primary structure comprises 239 residues: Ubiquinone biosynthesis O-methyltransferase (239 aa).

Positions 44, 63, 84, and 128 each coordinate S-adenosyl-L-methionine.

Belongs to the methyltransferase superfamily. UbiG/COQ3 family.

It catalyses the reaction a 3-demethylubiquinol + S-adenosyl-L-methionine = a ubiquinol + S-adenosyl-L-homocysteine + H(+). The catalysed reaction is a 3-(all-trans-polyprenyl)benzene-1,2-diol + S-adenosyl-L-methionine = a 2-methoxy-6-(all-trans-polyprenyl)phenol + S-adenosyl-L-homocysteine + H(+). It functions in the pathway cofactor biosynthesis; ubiquinone biosynthesis. O-methyltransferase that catalyzes the 2 O-methylation steps in the ubiquinone biosynthetic pathway. This is Ubiquinone biosynthesis O-methyltransferase from Xanthomonas oryzae pv. oryzae (strain MAFF 311018).